The following is a 425-amino-acid chain: 2-methylserine hydroxymethyltransferase (425 aa).

(6S)-5,6,7,8-tetrahydrofolate-binding positions include L126 and G130–L132. K235 carries the post-translational modification N6-(pyridoxal phosphate)lysine. E251 contributes to the (6S)-5,6,7,8-tetrahydrofolate binding site.

It belongs to the SHMT family. Homodimer. Pyridoxal 5'-phosphate serves as cofactor.

It localises to the cytoplasm. It carries out the reaction (6R)-5,10-methylene-5,6,7,8-tetrahydrofolate + D-alanine + H2O = 2-methylserine + (6S)-5,6,7,8-tetrahydrofolate. It functions in the pathway one-carbon metabolism; tetrahydrofolate interconversion. Inhibited by hydroxylamine and sodium borohydride. In terms of biological role, catalyzes the reversible interconversion of alpha-methyl-L-serine to D-alanine with tetrahydrofolate (THF) serving as the one-carbon carrier. Cannot use alpha-methyl-D-serine, L-serine, D-serine or L-alanine. The polypeptide is 2-methylserine hydroxymethyltransferase (Paracoccus sp).